The primary structure comprises 385 residues: Protein delta homolog 1 (385 aa).

A signal peptide spans methionine 1–glycine 23. 6 consecutive EGF-like domains span residues alanine 24–aspartate 55, leucine 53–glutamate 86, aspartate 88–glutamine 125, lysine 127–glutamate 168, alanine 172–serine 208, and proline 210–alanine 247. Over alanine 24–glutamine 305 the chain is Extracellular. Intrachain disulfides connect cysteine 26/cysteine 37, cysteine 30/cysteine 43, cysteine 45/cysteine 54, cysteine 57/cysteine 68, cysteine 63/cysteine 74, cysteine 76/cysteine 85, cysteine 92/cysteine 103, cysteine 97/cysteine 113, cysteine 115/cysteine 124, cysteine 131/cysteine 144, cysteine 138/cysteine 156, and cysteine 158/cysteine 167. Serine 94 is a glycosylation site (O-linked (GalNAc...) serine). N-linked (GlcNAc...) asparagine glycosylation occurs at asparagine 100. The N-linked (GlcNAc...) asparagine; atypical; partial glycan is linked to asparagine 165. A glycan (N-linked (GlcNAc...) asparagine; atypical) is linked at asparagine 174. 6 disulfides stabilise this stretch: cysteine 176-cysteine 187, cysteine 181-cysteine 196, cysteine 198-cysteine 207, cysteine 214-cysteine 225, cysteine 219-cysteine 235, and cysteine 237-cysteine 246. The O-linked (GalNAc...) serine glycan is linked to serine 216. O-linked (GalNAc...) threonine glycosylation occurs at threonine 224. O-linked (GalNAc...) threonine glycosylation is present at threonine 258. Residue threonine 267 is glycosylated (O-linked (GalNAc...) threonine; partial). O-linked (GalNAc...) threonine glycosylation occurs at threonine 271. Asparagine 295 carries an N-linked (GlcNAc...) asparagine glycan. The chain crosses the membrane as a helical span at residues alanine 306–leucine 329. At asparagine 330 to isoleucine 385 the chain is on the cytoplasmic side.

Monomer. Interacts with SH3RF2. N- and O-glycosylated. In terms of tissue distribution, highly expressed in fetal liver, placenta, adult adrenal gland, brain, testis and ovary and, to a lesser degree, in adult kidney, muscle, thymus and heart.

It is found in the membrane. Its subcellular location is the cytoplasm. In terms of biological role, may have a role in neuroendocrine differentiation. Inhibits adipocyte differentiation. The chain is Protein delta homolog 1 (Dlk1) from Mus musculus (Mouse).